The primary structure comprises 475 residues: F-box/kelch-repeat protein At1g22040 (475 aa).

Positions 1-28 (MGSVMSLSCSKRKATSQDVECSSESRKR) are disordered. Positions 41–87 (CRLIPSLPDELSIQILARLPRICYSSVRLVSRRWRSAVSTSEVYSLR) constitute an F-box domain. Kelch repeat units lie at residues 94–140 (EEWL…KSLS), 182–228 (GLYV…VLNK), 229–279 (KLYV…AFLA), 306–350 (PFFV…VDGE), and 352–401 (YAFD…GFHG).

This is F-box/kelch-repeat protein At1g22040 from Arabidopsis thaliana (Mouse-ear cress).